The following is a 307-amino-acid chain: Ribosomal RNA small subunit methyltransferase H (307 aa).

S-adenosyl-L-methionine-binding positions include 32-34 (GGH), aspartate 52, phenylalanine 78, aspartate 100, and glutamine 107.

It belongs to the methyltransferase superfamily. RsmH family.

It is found in the cytoplasm. The enzyme catalyses cytidine(1402) in 16S rRNA + S-adenosyl-L-methionine = N(4)-methylcytidine(1402) in 16S rRNA + S-adenosyl-L-homocysteine + H(+). Specifically methylates the N4 position of cytidine in position 1402 (C1402) of 16S rRNA. The polypeptide is Ribosomal RNA small subunit methyltransferase H (Coxiella burnetii (strain Dugway 5J108-111)).